A 221-amino-acid chain; its full sequence is Endonuclease V (221 aa).

The Mg(2+) site is built by aspartate 44 and aspartate 112.

It belongs to the endonuclease V family. Requires Mg(2+) as cofactor.

It is found in the cytoplasm. The enzyme catalyses Endonucleolytic cleavage at apurinic or apyrimidinic sites to products with a 5'-phosphate.. DNA repair enzyme involved in the repair of deaminated bases. Selectively cleaves double-stranded DNA at the second phosphodiester bond 3' to a deoxyinosine leaving behind the intact lesion on the nicked DNA. In Nostoc sp. (strain PCC 7120 / SAG 25.82 / UTEX 2576), this protein is Endonuclease V.